The chain runs to 297 residues: B-lymphocyte antigen CD20 (297 aa).

Topologically, residues methionine 1–threonine 51 are cytoplasmic. Position 36 is a phosphoserine (serine 36). The chain crosses the membrane as a helical span at residues leucine 52–isoleucine 72. The Extracellular portion of the chain corresponds to histidine 73–aspartate 75. A helical transmembrane segment spans residues valine 76–isoleucine 96. The Cytoplasmic segment spans residues serine 97–leucine 122. A helical membrane pass occupies residues serine 123 to isoleucine 143. The Extracellular portion of the chain corresponds to serine 144 to serine 188. A helical transmembrane segment spans residues valine 189 to alanine 209. Over glycine 210–proline 297 the chain is Cytoplasmic. Cysteine 220 carries the S-palmitoyl cysteine lipid modification. Serine 225 bears the Phosphoserine mark. The interval glutamate 274–proline 297 is disordered. Low complexity predominate over residues glutamate 281–proline 290.

The protein belongs to the MS4A family. As to quaternary structure, forms homotetramers. Interacts with the heavy and light chains of cell surface IgM, the antigen-binding components of the BCR. Phosphorylated. Might be functionally regulated by protein kinase(s). In terms of tissue distribution, expressed in PBMCs and lymph node from healthy dogs, in B-cells of canine lymphoma, but not in T-cell lymphoma cells and non-T and non-B-cell lymphoma cells.

The protein localises to the cell membrane. Functionally, B-lymphocyte-specific membrane protein that plays a role in the regulation of cellular calcium influx necessary for the development, differentiation, and activation of B-lymphocytes. Functions as a store-operated calcium (SOC) channel component promoting calcium influx after activation by the B-cell receptor/BCR. The polypeptide is B-lymphocyte antigen CD20 (MS4A1) (Canis lupus familiaris (Dog)).